A 336-amino-acid polypeptide reads, in one-letter code: tRNA N6-adenosine threonylcarbamoyltransferase (336 aa).

Fe cation contacts are provided by histidine 114 and histidine 118. Substrate contacts are provided by residues leucine 136–glycine 140, aspartate 169, glycine 182, aspartate 186, and asparagine 275. Fe cation is bound at residue aspartate 302.

The protein belongs to the KAE1 / TsaD family. Fe(2+) serves as cofactor.

It is found in the cytoplasm. It catalyses the reaction L-threonylcarbamoyladenylate + adenosine(37) in tRNA = N(6)-L-threonylcarbamoyladenosine(37) in tRNA + AMP + H(+). In terms of biological role, required for the formation of a threonylcarbamoyl group on adenosine at position 37 (t(6)A37) in tRNAs that read codons beginning with adenine. Is involved in the transfer of the threonylcarbamoyl moiety of threonylcarbamoyl-AMP (TC-AMP) to the N6 group of A37, together with TsaE and TsaB. TsaD likely plays a direct catalytic role in this reaction. This Streptococcus agalactiae serotype Ia (strain ATCC 27591 / A909 / CDC SS700) protein is tRNA N6-adenosine threonylcarbamoyltransferase.